Consider the following 280-residue polypeptide: Manganese transport system membrane protein MntC (280 aa).

9 consecutive transmembrane segments (helical) span residues 16-36, 41-61, 62-82, 92-112, 137-157, 168-188, 193-213, 221-241, and 244-264; these read ALIT…FIIL, LMGD…YMMG, MNFF…IGFV, TAIG…ISFA, TIII…EFLV, YGLN…LVTV, TVGI…AYLL, IVLA…FSYI, and LASG…AFLF.

The protein belongs to the ABC-3 integral membrane protein family.

Its subcellular location is the cell membrane. In terms of biological role, this protein is probably a component of a manganese permease, a binding protein-dependent, ATP-driven transport system. This chain is Manganese transport system membrane protein MntC (mntC), found in Listeria monocytogenes serovar 1/2a (strain ATCC BAA-679 / EGD-e).